A 213-amino-acid polypeptide reads, in one-letter code: ATP-dependent Clp protease proteolytic subunit (213 aa).

Catalysis depends on Ser114, which acts as the Nucleophile. His139 is a catalytic residue.

The protein belongs to the peptidase S14 family. In terms of assembly, fourteen ClpP subunits assemble into 2 heptameric rings which stack back to back to give a disk-like structure with a central cavity, resembling the structure of eukaryotic proteasomes.

The protein resides in the cytoplasm. The catalysed reaction is Hydrolysis of proteins to small peptides in the presence of ATP and magnesium. alpha-casein is the usual test substrate. In the absence of ATP, only oligopeptides shorter than five residues are hydrolyzed (such as succinyl-Leu-Tyr-|-NHMec, and Leu-Tyr-Leu-|-Tyr-Trp, in which cleavage of the -Tyr-|-Leu- and -Tyr-|-Trp bonds also occurs).. Cleaves peptides in various proteins in a process that requires ATP hydrolysis. Has a chymotrypsin-like activity. Plays a major role in the degradation of misfolded proteins. The protein is ATP-dependent Clp protease proteolytic subunit of Pseudomonas putida (strain ATCC 47054 / DSM 6125 / CFBP 8728 / NCIMB 11950 / KT2440).